A 481-amino-acid chain; its full sequence is Guanine nucleotide exchange factor C9orf72 homolog (481 aa).

Residues 23-194 (SPLLAATFAY…ELLASMKSHS (172 aa)) form the uDENN C9ORF72-type domain. Residues 200-343 (DIADTVLNDD…SELTAFWRAT (144 aa)) enclose the cDENN C9ORF72-type domain. The 95-residue stretch at 370 to 464 (VLHRDTLVKA…IKPGLHSFIF (95 aa)) folds into the dDENN C9ORF72-type domain. The tract at residues 461 to 481 (SFIFGRPFYTSVQERDVLMTF) is required for the homodimerization of the C9orf72-SMCR8 complex.

As to quaternary structure, component of the C9orf72-SMCR8 complex, at least composed of C9orf72, SMCR8 and WDR41. The complex is formed of two protomers, each individually consisting of one molecule each of C9orf72, SMCR8 and WDR41. The protomers homodimerize via an interaction between C9orf72 (via C-terminus) and SMCR8 (via N-terminus). Within each protomer SMCR8 (via DENN domain) acts as a bridging protein between WDR41 (via C-terminus and N-terminus) and C9orf72 (via C-terminus). The C9orf72-SMCR8 complex associates with the ULK1/ATG1 kinase complex. Interacts with ULK1/ATG1 kinase complex members ULK1, ATG13 and RB1CC1. Interacts with SMCR8; the interaction is direct. Interacts with HNRNPA1, HNRNPA2B1 and UBQLN2. Interacts with small Rab GTPase RAB1A; the interaction mediates recruitment of RAB1A to the ULK1/ATG1 kinase complex. Also interacts with small Rab GTPase RAB7A. Interacts with cofilin. Interacts with GTP-binding proteins ARF1 and ARF6. Interacts with the DLG4/PSD-95. Interacts with CARM1 (via PH domain-like fold). Interacts with RAB39A and RAB39B (in GDP-bound forms); functions as GEF for RAB39A and RAB39B. As to expression, expressed in postnatal cerebellum and cortex (at protein level). Neuronal expression is detected in several regions of the adult brain and spinal cord. Prominent expression also observed in embryonic and early postnatal neurons including retinal ganglion cells, sensory neurons in the olfactory epithelium and in dorsal root ganglia, and spinal motor neurons. Expressed in the developing cerebral cortex, cerebellum, olfactory bulb, hippocampus and spinal cord in the embryo and in P0 cortical neurons and astrocytes. Also expressed in non-neuronal tissues such as kidney and tooth. In the spleen, highly expressed in myeloid cells compared to B cell and T cell populations where expression is much lower. In the brain, highly expressed in microglia. Expressed in the forebrain, including in the glomerular layer of the olfactory bulb (at protein level).

It is found in the nucleus. Its subcellular location is the cytoplasm. It localises to the P-body. The protein localises to the stress granule. The protein resides in the endosome. It is found in the lysosome. Its subcellular location is the cytoplasmic vesicle. It localises to the autophagosome. The protein localises to the autolysosome. The protein resides in the secreted. It is found in the cell projection. Its subcellular location is the axon. It localises to the growth cone. The protein localises to the perikaryon. The protein resides in the dendrite. It is found in the presynapse. Its subcellular location is the postsynapse. Functionally, acts as a guanine-nucleotide releasing factor (GEF) for Rab GTPases by promoting the conversion of inactive RAB-GDP to the active form RAB-GTP. Acts as a GEF for RAB39A which enables HOPS-mediated autophagosome-lysosome membrane tethering and fusion in mammalian autophagy. Component of the C9orf72-SMCR8 complex where both subunits display GEF activity and that regulates autophagy. As part of the C9orf72-SMCR8-WDR41 (CSW) complex, functions as GEF for RAB8A, and RAB39B, thereby promoting autophagosome maturation. As part of the C9orf72-SMCR8 complex, also functions as GTPase activating protein (GAP) for RAB8A and RAB11A in vitro. The C9orf72-SMCR8 complex also acts as a regulator of autophagy initiation by interacting with the ULK1/ATG1 kinase complex and modulating its protein kinase activity. Promotes initiation of autophagy by regulating the RAB1A-dependent trafficking of the ULK1/ATG1 kinase complex to the phagophore which leads to autophagosome formation. Acts as a regulator of mTORC1 signaling by promoting phosphorylation of mTORC1 substrates. Plays a role in endosomal trafficking. May be involved in regulating the maturation of phagosomes to lysosomes. Promotes the lysosomal localization and lysosome-mediated degradation of CARM1 which leads to inhibition of starvation-induced lipid metabolism. Regulates actin dynamics in motor neurons by inhibiting the GTP-binding activity of ARF6, leading to ARF6 inactivation. This reduces the activity of the LIMK1 and LIMK2 kinases which are responsible for phosphorylation and inactivation of CFL1/cofilin, leading to cofilin activation. Positively regulates axon extension and axon growth cone size in spinal motor neurons. Required for SMCR8 protein expression and localization at pre- and post-synaptic compartments in the forebrain, also regulates protein abundance of RAB3A and GRIA1/GLUR1 in post-synaptic compartments in the forebrain and hippocampus. Plays a role within the hematopoietic system in restricting inflammation and the development of autoimmunity. The sequence is that of Guanine nucleotide exchange factor C9orf72 homolog from Mus musculus (Mouse).